A 263-amino-acid polypeptide reads, in one-letter code: MAPTQAQKVLEAFEDFLKCLDLESYQEKYRPIKTVEQDLPRELNPLPDLYDHYWKPNGNTLHFPDFETFFDQWWEKRLRPLNEFIRKYFWGCSYEFVRLGLEARLYRTAVSIWTQFHFCYRWNASCQLRLTATWELDAQGIDAQIQAEDRLIGIQIKKETYRSEAREGNRFLRRREHSALLEVPYTLQSPEELERKAQRARTREEAYRLWVKIAHHLERLPNGFVIFRESYVKDLENFLKQNATTLSGLIPWDKVAREALTGP.

The enzyme catalyses Endonucleolytic cleavage of DNA to give specific double-stranded fragments with terminal 5'-phosphates.. Functionally, a P subtype restriction enzyme that recognizes the double-stranded sequence 5'-TCGA-3' and cleaves after T-1. The sequence is that of Type II restriction enzyme TthHB8I (tthHB8IR) from Thermus thermophilus (strain ATCC 27634 / DSM 579 / HB8).